The sequence spans 343 residues: 3-dehydroquinate synthase (343 aa).

NAD(+) contacts are provided by residues 61 to 66 (SGEKYK), 95 to 96 (GV), 119 to 120 (TT), Lys132, Lys141, Asn142, and 159 to 162 (FLKT). Residues Glu174, His231, and His248 each contribute to the Zn(2+) site.

It belongs to the sugar phosphate cyclases superfamily. Dehydroquinate synthase family. In terms of assembly, homodimer. NAD(+) serves as cofactor. Requires Co(2+) as cofactor. Zn(2+) is required as a cofactor.

Its subcellular location is the cytoplasm. The catalysed reaction is 7-phospho-2-dehydro-3-deoxy-D-arabino-heptonate = 3-dehydroquinate + phosphate. The protein operates within metabolic intermediate biosynthesis; chorismate biosynthesis; chorismate from D-erythrose 4-phosphate and phosphoenolpyruvate: step 2/7. Catalyzes the conversion of 3-deoxy-D-arabino-heptulosonate 7-phosphate (DAHP) to dehydroquinate (DHQ). This is 3-dehydroquinate synthase from Helicobacter pylori (strain ATCC 700392 / 26695) (Campylobacter pylori).